We begin with the raw amino-acid sequence, 424 residues long: Vasopressin V1b receptor (424 aa).

The disordered stretch occupies residues 1–22 (MDSGPLWDANPTPRGTLSAPNA). Residues 1–35 (MDSGPLWDANPTPRGTLSAPNATTPWLGRDEELAK) are Extracellular-facing. Positions 13-22 (PRGTLSAPNA) are enriched in polar residues. Residue Asn-21 is glycosylated (N-linked (GlcNAc...) asparagine). A helical transmembrane segment spans residues 36-59 (VEIGVLATVLVLATGGNLAVLLTL). The Cytoplasmic segment spans residues 60-71 (GQLGRKRSRMHL). Residues 72–93 (FVLHLALTDLAVALFQVLPQLL) form a helical membrane-spanning segment. The Extracellular portion of the chain corresponds to 94–108 (WDITYRFQGPDLLCR). The cysteines at positions 107 and 186 are disulfide-linked. The helical transmembrane segment at 109-130 (AVKYLQVLSMFASTYMLLAMTL) threads the bilayer. At 131–151 (DRYLAVCHPLRSLQQPGQSTY) the chain is on the cytoplasmic side. The helical transmembrane segment at 152-173 (LLIAAPWLLAAIFSLPQVFIFS) threads the bilayer. The Extracellular portion of the chain corresponds to 174-201 (LREVIQGSGVLDCWADFGFPWGPRAYLT). A helical membrane pass occupies residues 202–222 (WTTLAIFVLPVTMLTACYSLI). Residues 223-283 (CHEICKNLKV…RAKIRTVKMT (61 aa)) are Cytoplasmic-facing. The helical transmembrane segment at 284–303 (FVIVLAYIACWAPFFSVQMW) threads the bilayer. Residues 304-321 (SVWDKNAPDEDSTNVAFT) lie on the Extracellular side of the membrane. Residues 322-341 (ISMLLGNLNSCCNPWIYMGF) form a helical membrane-spanning segment. The Cytoplasmic portion of the chain corresponds to 342–424 (NSHLLPRPLR…GEGTAETIIF (83 aa)). The tract at residues 398 to 417 (SGRPRPEESPRDLELADGEG) is disordered. Over residues 401–411 (PRPEESPRDLE) the composition is skewed to basic and acidic residues.

This sequence belongs to the G-protein coupled receptor 1 family. Vasopressin/oxytocin receptor subfamily.

It is found in the cell membrane. Receptor for arginine vasopressin. The activity of this receptor is mediated by G proteins which activate a phosphatidyl-inositol-calcium second messenger system. In terms of biological role, (Microbial infection) During SARS coronavirus-2/SARS-CoV-2 infection, may recognize and internalize the complex formed by AVP/Arg-vasopressin, SARS-CoV-2 spike protein and secreted ACE2 through DNM2/dynamin 2-dependent endocytosis. The sequence is that of Vasopressin V1b receptor from Homo sapiens (Human).